The sequence spans 1001 residues: Non-canonical poly(A) RNA polymerase protein Trf4-1 (1001 aa).

Composition is skewed to low complexity over residues 44–86 (TING…NNSS) and 127–163 (RNSTNINTTSGGSTSSSADSTTNRDNNSPANSSSTNG). 2 disordered regions span residues 44–92 (TING…PYLS) and 115–238 (QQQQ…AGGA). Residues 164–178 (PGAGTGTSTGAGGTG) are compositionally biased toward gly residues. A compositionally biased stretch (low complexity) spans 179 to 216 (TNSPATTASSTAATTTGPATSMSDTSNNPPQSTTTPAS). 2 residues coordinate Mn(2+): aspartate 328 and aspartate 330. In terms of domain architecture, PAP-associated spans 458-517 (NLGVLLLEFFELYGRRFNYMKIGISIKNGGRYMPKDELQRDMVDGHRPSLLCIEDPLTPG). 4 disordered regions span residues 631–652 (PTAHGHSHAHSHSHGHAHPGAH), 687–740 (QQQQ…AQEV), 767–963 (ASNS…LRGT), and 977–1001 (SSESSIASSSSSSSRSGQDQQRDER). The segment covering 635-649 (GHSHAHSHSHGHAHP) has biased composition (basic residues). Low complexity-rich tracts occupy residues 687-708 (QQQQQNATAHTHSQQQTQNQSQ) and 768-788 (SNSWSGNGNGNGNSSSSTGSS). Positions 827–841 (VGTGSNRGGGDGSGG) are enriched in gly residues. The span at 844-854 (YNQRNNHNSSG) shows a compositional bias: polar residues. Residues 855 to 880 (YYHQQYYVPPPMQQQLSKSNSSSNYH) are compositionally biased toward low complexity. Over residues 881 to 912 (QQHHHSHSHGNHSHRQQHHHQQQHHHQQRPQH) the composition is skewed to basic residues. Low complexity-rich tracts occupy residues 932-955 (SAGNASNSSSNCSNSSSSSGSNNS) and 977-992 (SSESSIASSSSSSSRS).

Belongs to the DNA polymerase type-B-like family. The cofactor is Mn(2+).

Its subcellular location is the cytoplasm. It carries out the reaction RNA(n) + ATP = RNA(n)-3'-adenine ribonucleotide + diphosphate. Its function is as follows. Involved in a post-transcriptional quality control mechanism limiting inappropriate expression of genetic information. Polyadenylation is required for the degradative activity of the exosome on several of its nuclear RNA substrates. Polyadenylates RNA processing and degradation intermediates of snRNAs and mRNAs. In Drosophila melanogaster (Fruit fly), this protein is Non-canonical poly(A) RNA polymerase protein Trf4-1.